Here is a 251-residue protein sequence, read N- to C-terminus: Lactose phosphotransferase system repressor (251 aa).

An HTH deoR-type domain is found at 3 to 58 (KYDRLDEITKLVNKRGSVRTNEIVEDLNVSDMTVRRDLAELEEKGVLTKIHGGARS). A DNA-binding region (H-T-H motif) is located at residues 20–39 (VRTNEIVEDLNVSDMTVRRD).

Repressor of the lactose catabolism operon. Galactose-6-phosphate is the inducer. The protein is Lactose phosphotransferase system repressor (lacR) of Staphylococcus epidermidis (strain ATCC 35984 / DSM 28319 / BCRC 17069 / CCUG 31568 / BM 3577 / RP62A).